The chain runs to 101 residues: MAETTNTPETSHRKELIGLVVSTKMQKTIVVQVERQKSHAMYGRVISRRKRFYAHDEEQTAHIGDYVRIEETRPLSKLKRWKLAEVLRRSALAPEVQEAAS.

Belongs to the universal ribosomal protein uS17 family. As to quaternary structure, part of the 30S ribosomal subunit.

One of the primary rRNA binding proteins, it binds specifically to the 5'-end of 16S ribosomal RNA. The chain is Small ribosomal subunit protein uS17 from Koribacter versatilis (strain Ellin345).